Here is a 274-residue protein sequence, read N- to C-terminus: NH(3)-dependent NAD(+) synthetase (274 aa).

An ATP-binding site is contributed by glycine 46 to serine 53. Aspartate 52 is a Mg(2+) binding site. Arginine 140 contacts deamido-NAD(+). Threonine 160 provides a ligand contact to ATP. Residue glutamate 165 coordinates Mg(2+). Residues lysine 173 and aspartate 180 each coordinate deamido-NAD(+). ATP-binding residues include lysine 189 and threonine 211. Histidine 260–lysine 261 is a binding site for deamido-NAD(+).

Belongs to the NAD synthetase family. Homodimer.

It catalyses the reaction deamido-NAD(+) + NH4(+) + ATP = AMP + diphosphate + NAD(+) + H(+). It participates in cofactor biosynthesis; NAD(+) biosynthesis; NAD(+) from deamido-NAD(+) (ammonia route): step 1/1. Catalyzes the ATP-dependent amidation of deamido-NAD to form NAD. Uses ammonia as a nitrogen source. This Streptococcus pneumoniae serotype 19F (strain G54) protein is NH(3)-dependent NAD(+) synthetase.